The primary structure comprises 346 residues: Uricase (346 aa).

A disordered region spans residues 1–23; it reads MFATPLRQPTNASGARPAVSMDG. Residues lysine 39 and threonine 84 each act as charge relay system in the active site. 7 residues coordinate urate: threonine 84, aspartate 85, phenylalanine 208, arginine 225, valine 273, glutamine 274, and asparagine 300. The active-site Charge relay system is histidine 302. The Microbody targeting signal signature appears at 344 to 346; sequence SHL.

It belongs to the uricase family. In terms of tissue distribution, malpighian tubules.

It localises to the peroxisome. It carries out the reaction urate + O2 + H2O = 5-hydroxyisourate + H2O2. Its pathway is purine metabolism; urate degradation; (S)-allantoin from urate: step 1/3. Its activity is regulated as follows. Repressed by 20-hydroxyecdysone. Catalyzes the oxidation of uric acid to 5-hydroxyisourate, which is further processed to form (S)-allantoin. In Drosophila pseudoobscura pseudoobscura (Fruit fly), this protein is Uricase (Uro).